The following is a 348-amino-acid chain: Probable purine nucleoside permease C285.05 (348 aa).

Residues 1–21 form the signal peptide; that stretch reads MLFLKLVASVLALMTIVPAQA.

Belongs to the NUP family.

It is found in the endoplasmic reticulum. Probable nucleoside permease that transports adenosine and guanosine. The polypeptide is Probable purine nucleoside permease C285.05 (Schizosaccharomyces pombe (strain 972 / ATCC 24843) (Fission yeast)).